A 442-amino-acid chain; its full sequence is 3-ketoacyl-CoA thiolase (442 aa).

The active-site Acyl-thioester intermediate is the cysteine 105. Active-site proton acceptor residues include histidine 398 and cysteine 428.

This sequence belongs to the thiolase-like superfamily. Thiolase family. Heterotetramer of two alpha chains (FadJ) and two beta chains (FadI).

It localises to the cytoplasm. The catalysed reaction is an acyl-CoA + acetyl-CoA = a 3-oxoacyl-CoA + CoA. Its pathway is lipid metabolism; fatty acid beta-oxidation. Catalyzes the final step of fatty acid oxidation in which acetyl-CoA is released and the CoA ester of a fatty acid two carbons shorter is formed. The polypeptide is 3-ketoacyl-CoA thiolase (Aliivibrio fischeri (strain ATCC 700601 / ES114) (Vibrio fischeri)).